Reading from the N-terminus, the 165-residue chain is Disulfide bond formation protein B (165 aa).

Over 1–16 the chain is Cytoplasmic; sequence MTILNSLNQFSKGRLS. The chain crosses the membrane as a helical span at residues 17 to 33; that stretch reads WLLLLLFVVFFEACALY. Topologically, residues 34–51 are periplasmic; the sequence is FQHVMMLAPCVMCIYERV. A disulfide bridge connects residues cysteine 43 and cysteine 46. A helical transmembrane segment spans residues 52-67; it reads AMMGVGVAAIVGLMAP. Residues 68–74 are Cytoplasmic-facing; the sequence is NNPIFRW. Residues 75 to 92 traverse the membrane as a helical segment; the sequence is LGLIGWGLSSYKGLLLAQ. Residues 93–147 are Periplasmic-facing; that stretch reads QHVDYQFNPSPFATCDLFVTFPSWRPLNQWAPWIFEAYGDCSKIVWQFLDLSMPQ. Cysteine 107 and cysteine 133 are joined by a disulfide. A helical transmembrane segment spans residues 148 to 165; that stretch reads WLVVIFAGNLIALALIVI.

Belongs to the DsbB family.

The protein resides in the cell inner membrane. Functionally, required for disulfide bond formation in some periplasmic proteins. Acts by oxidizing the DsbA protein. The protein is Disulfide bond formation protein B of Vibrio alginolyticus.